A 741-amino-acid polypeptide reads, in one-letter code: Aspartyl/asparaginyl beta-hydroxylase (741 aa).

The tract at residues 1–54 (MAPRKNAKGGGGNSSSSGSGSGSGSGSPSTGSSGSSSSPGARREAKHGGHKNGR) is disordered. At 1 to 62 (MAPRKNAKGG…GRRGGISGGS (62 aa)) the chain is on the cytoplasmic side. Gly residues predominate over residues 8–25 (KGGGGNSSSSGSGSGSGS). A Phosphoserine modification is found at serine 15. Residues 26-40 (GSPSTGSSGSSSSPG) show a composition bias toward low complexity. A helical; Signal-anchor for type II membrane protein membrane pass occupies residues 63 to 83 (FFTWFMVIALLGVWTSVAVVW). The Lumenal portion of the chain corresponds to 84–741 (FDLVDYEEVL…PQQRRSLPAI (658 aa)). Residues aspartate 100, aspartate 102, aspartate 104, aspartate 106, and aspartate 111 each coordinate Ca(2+). 2 disordered regions span residues 120 to 141 (ERSP…AELE) and 222 to 244 (TASQ…SDPS). Over residues 231–242 (MEEMTNEQENSD) the composition is skewed to acidic residues. 5 TPR repeats span residues 324-357 (IKAE…YPQS), 365-398 (AQCE…PDAP), 437-470 (TTLK…TPND), 472-504 (FAKV…GDPG), and 508-540 (GRFY…GHFA). Asparagine 453 carries N-linked (GlcNAc...) asparagine glycosylation. Tryptophan 608 contacts 2-oxoglutarate. Cysteines 624 and 631 form a disulfide. Residue serine 651 participates in 2-oxoglutarate binding. Residue histidine 662 coordinates Fe cation. 671-673 (RMH) lines the 2-oxoglutarate pocket. Asparagine 689 is a glycosylation site (N-linked (GlcNAc...) asparagine). Histidine 708 contributes to the Fe cation binding site. Residue arginine 718 coordinates 2-oxoglutarate.

The protein belongs to the aspartyl/asparaginyl beta-hydroxylase family. As to quaternary structure, monomer. Isoform 2 interacts with CASQ2. Fe cation is required as a cofactor. In terms of tissue distribution, isoform 1 is detected in heart, liver and ovary (at protein level). Detected in heart ventricle. Isoform 1 is widely expressed. Isoform 2 is detected in heart and skeletal muscle.

Its subcellular location is the endoplasmic reticulum membrane. The protein localises to the sarcoplasmic reticulum membrane. It catalyses the reaction L-aspartyl-[protein] + 2-oxoglutarate + O2 = 3-hydroxy-L-aspartyl-[protein] + succinate + CO2. Specifically hydroxylates an Asp or Asn residue in certain epidermal growth factor-like (EGF) domains of a number of proteins. This chain is Aspartyl/asparaginyl beta-hydroxylase (Asph), found in Mus musculus (Mouse).